The chain runs to 253 residues: MEKLLIVNADDFGLCKGQNYGIIDAFRNGVVSSTTAMMNSVDINHAAELSAQYPALPVGMHFVLTFGRPLTAMPSLTDANGELGKWLWQRAGAGTLDLNEIAQELECQFERFSAVFGRPPTHIDSHHHVHMLPQIYPLVAAFAREKSLPLRIDRHEVQQHGLTLDNPRSSEWFNAGFYGENLSEPSFLQLLEHADQQGVNSLEIMCHPAFIDQTLMTSGYCYPRLTELAILTSPTLKPAIAQRGYRLGSFLDC.

Residues H61 and H126 each coordinate Mg(2+).

It belongs to the YdjC deacetylase family. ChbG subfamily. In terms of assembly, homodimer. Mg(2+) is required as a cofactor.

The protein resides in the cytoplasm. The enzyme catalyses N,N'-diacetylchitobiose + H2O = N-acetyl-beta-D-glucosaminyl-(1-&gt;4)-D-glucosamine + acetate. The catalysed reaction is diacetylchitobiose-6'-phosphate + H2O = N'-monoacetylchitobiose-6'-phosphate + acetate. It participates in glycan degradation; chitin degradation. Involved in the degradation of chitin. ChbG is essential for growth on the acetylated chitooligosaccharides chitobiose and chitotriose but is dispensable for growth on cellobiose and chitosan dimer, the deacetylated form of chitobiose. Deacetylation of chitobiose-6-P and chitotriose-6-P is necessary for both the activation of the chb promoter by the regulatory protein ChbR and the hydrolysis of phosphorylated beta-glucosides by the phospho-beta-glucosidase ChbF. Catalyzes the removal of only one acetyl group from chitobiose-6-P to yield monoacetylchitobiose-6-P, the inducer of ChbR and the substrate of ChbF. The sequence is that of Chitooligosaccharide deacetylase from Yersinia pseudotuberculosis serotype O:1b (strain IP 31758).